A 263-amino-acid chain; its full sequence is Proteasome subunit alpha type-1 (263 aa).

Methionine 1 is subject to N-acetylmethionine. Residue serine 110 is modified to Phosphoserine; alternate. Serine 110 carries O-linked (GlcNAc) serine; alternate glycosylation. Lysine 115 is covalently cross-linked (Glycyl lysine isopeptide (Lys-Gly) (interchain with G-Cter in ubiquitin)). At serine 177 the chain carries Phosphoserine. Residue lysine 208 forms a Glycyl lysine isopeptide (Lys-Gly) (interchain with G-Cter in ubiquitin) linkage. The disordered stretch occupies residues 232–263; the sequence is FLDGLEERPQRKAQPSQAADEPAEKADEPMEH. Basic and acidic residues predominate over residues 253 to 263; it reads PAEKADEPMEH.

The protein belongs to the peptidase T1A family. The 26S proteasome consists of a 20S proteasome core and two 19S regulatory subunits. The 20S proteasome core is a barrel-shaped complex made of 28 subunits that are arranged in four stacked rings. The two outer rings are each formed by seven alpha subunits, and the two inner rings are formed by seven beta subunits. The proteolytic activity is exerted by three beta-subunits PSMB5, PSMB6 and PSMB7. Interacts with NOTCH3. Interacts with ZFAND1. In terms of processing, proteolytically cleaved from a C-terminal extension in the course of the conversion of the proteasome from its latent form into its active form. Ubiquitous.

The protein resides in the cytoplasm. Its subcellular location is the nucleus. In terms of biological role, component of the 20S core proteasome complex involved in the proteolytic degradation of most intracellular proteins. This complex plays numerous essential roles within the cell by associating with different regulatory particles. Associated with two 19S regulatory particles, forms the 26S proteasome and thus participates in the ATP-dependent degradation of ubiquitinated proteins. The 26S proteasome plays a key role in the maintenance of protein homeostasis by removing misfolded or damaged proteins that could impair cellular functions, and by removing proteins whose functions are no longer required. Associated with the PA200 or PA28, the 20S proteasome mediates ubiquitin-independent protein degradation. This type of proteolysis is required in several pathways including spermatogenesis (20S-PA200 complex) or generation of a subset of MHC class I-presented antigenic peptides (20S-PA28 complex). The chain is Proteasome subunit alpha type-1 (Psma1) from Rattus norvegicus (Rat).